Here is a 905-residue protein sequence, read N- to C-terminus: Lateral signaling target protein 2 homolog (905 aa).

Lysine 87 participates in a covalent cross-link: Glycyl lysine isopeptide (Lys-Gly) (interchain with G-Cter in ubiquitin). A Phosphoserine modification is found at serine 334. Residues 354–441 (DEMSSLLSPP…RGQDGQSGEV (88 aa)) form a disordered region. Polar residues-rich tracts occupy residues 358–367 (SLLSPPSACQ) and 418–437 (PGNT…QDGQ). Threonine 512 carries the post-translational modification Phosphothreonine. Disordered regions lie at residues 516–552 (NPKS…DNSH) and 589–691 (PGSV…RGDV). 2 stretches are compositionally biased toward basic and acidic residues: residues 542–552 (PRAEGTGDNSH) and 605–615 (GGDKEPERIDE). The span at 647-656 (SGPQVDTASR) shows a compositional bias: polar residues. Residues 659–678 (GEGEVKGQPEPEARKQDPEK) are compositionally biased toward basic and acidic residues. The FYVE-type zinc-finger motif lies at 835 to 895 (DEACGFCTSC…VCTHCYMFHV (61 aa)). Cysteine 841, cysteine 844, cysteine 857, cysteine 860, cysteine 865, cysteine 868, and cysteine 887 together coordinate Zn(2+). Phosphothreonine; by MAP2K is present on threonine 888. Zn(2+) is bound at residue cysteine 890.

The protein belongs to the lst-2 family. As to quaternary structure, interacts with TRIM3. Monoubiquitination at Lys-87 prevents binding to phosphatidylinositol 3-phosphate (PI3P) and localization to early endosome membranes. Enriched in brain (at protein level).

The protein resides in the cytoplasm. It is found in the cytosol. It localises to the early endosome membrane. Negative regulator of epidermal growth factor receptor (EGFR) signaling. Acts by promoting EGFR degradation in endosomes when not monoubiquitinated. The polypeptide is Lateral signaling target protein 2 homolog (Zfyve28) (Mus musculus (Mouse)).